An 84-amino-acid polypeptide reads, in one-letter code: Large ribosomal subunit protein bL27 (84 aa).

The tract at residues 1–20 (MAHKKAGGSTRNGRDSHSKR) is disordered.

This sequence belongs to the bacterial ribosomal protein bL27 family.

This chain is Large ribosomal subunit protein bL27, found in Blochmanniella pennsylvanica (strain BPEN).